Consider the following 85-residue polypeptide: Neutrophil elastase 2A (85 aa).

The Peptidase S1 domain maps to 1 to 85 (IVGGRAAEPH…VAQGVFSFVR (85 aa)). Serine 67 acts as the Charge relay system in catalysis.

This sequence belongs to the peptidase S1 family. Elastase subfamily.

Functionally, may be involved in the degradation of connective tissue in chronic lung disease. This Equus caballus (Horse) protein is Neutrophil elastase 2A.